The primary structure comprises 88 residues: RNA-binding protein Hfq (88 aa).

In terms of domain architecture, Sm spans 9–68; sequence DPFLNALRRERIPVSIYLVNGIKLQGQIESFDQFVILLKNTVNQMVYKHAISTVVPARAV. The disordered stretch occupies residues 66–88; it reads RAVSHHSASDRPQGERPQEKTEE. Basic and acidic residues predominate over residues 72–88; sequence SASDRPQGERPQEKTEE.

Belongs to the Hfq family. Homohexamer.

Functionally, RNA chaperone that binds small regulatory RNA (sRNAs) and mRNAs to facilitate mRNA translational regulation in response to envelope stress, environmental stress and changes in metabolite concentrations. Also binds with high specificity to tRNAs. The polypeptide is RNA-binding protein Hfq (Aliivibrio fischeri (strain ATCC 700601 / ES114) (Vibrio fischeri)).